The chain runs to 41 residues: Cuticle protein 32 (41 aa).

4 consecutive repeat copies span residues 17–20 (AAPA), 25–28 (AAPA), 31–34 (AAPA), and 38–41 (AAPA).

Its function is as follows. Component of the cuticle of migratory locust which contains more than 100 different structural proteins. This is Cuticle protein 32 from Locusta migratoria (Migratory locust).